A 344-amino-acid chain; its full sequence is Transcription factor HHO3 (344 aa).

Disordered regions lie at residues 90 to 122 and 156 to 212; these read KWSS…DKKK and AFQP…KQRR. Acidic residues predominate over residues 97–106; it reads DETDKDEEAE. Residues 178-188 are compositionally biased toward low complexity; that stretch reads TPTSTTTTSST. Residues 206 to 266 form the HTH myb-type domain; it reads SNRKQRRCWS…HLQKYRLHTR (61 aa). The H-T-H motif DNA-binding region spans 237–262; that stretch reads PKQIRDLMKVDGLTNDEVKSHLQKYR. A disordered region spans residues 306–344; that stretch reads PVATQPPQSSTSGERSNRGCKSPATSSTTTHTPHLLPLS. Positions 310-319 are enriched in polar residues; that stretch reads QPPQSSTSGE. Low complexity predominate over residues 330-344; it reads TSSTTTHTPHLLPLS.

It localises to the nucleus. In terms of biological role, probable transcription factor involved in phosphate signaling in roots. This is Transcription factor HHO3 from Arabidopsis thaliana (Mouse-ear cress).